A 641-amino-acid polypeptide reads, in one-letter code: Mannosyl-oligosaccharide 1,2-alpha-mannosidase IB (641 aa).

Thr2 carries the N-acetylthreonine modification. At 2–36 (TTPALLPLSGRRIPPLNLGPPSFPHHRATLRLSEK) the chain is on the cytoplasmic side. Residues 37–57 (FILLLILSAFITLCFGAFFFL) traverse the membrane as a helical; Signal-anchor for type II membrane protein segment. At 58 to 641 (PDSSKHKRFD…TTLSGNPAVR (584 aa)) the chain is on the lumenal side. A disordered region spans residues 153–175 (NKPLPPVPIPNLVGIRGGDPEDN). Cys462 and Cys494 are oxidised to a cystine. The active-site Proton donor is the Glu508. Position 619 (Thr619) interacts with Ca(2+). Residue Asn631 is glycosylated (N-linked (GlcNAc...) asparagine).

This sequence belongs to the glycosyl hydrolase 47 family. It depends on Ca(2+) as a cofactor. Highest levels of expression in placenta and testis.

Its subcellular location is the golgi apparatus membrane. The catalysed reaction is N(4)-(alpha-D-Man-(1-&gt;2)-alpha-D-Man-(1-&gt;2)-alpha-D-Man-(1-&gt;3)-[alpha-D-Man-(1-&gt;2)-alpha-D-Man-(1-&gt;3)-[alpha-D-Man-(1-&gt;2)-alpha-D-Man-(1-&gt;6)]-alpha-D-Man-(1-&gt;6)]-beta-D-Man-(1-&gt;4)-beta-D-GlcNAc-(1-&gt;4)-beta-D-GlcNAc)-L-asparaginyl-[protein] (N-glucan mannose isomer 9A1,2,3B1,2,3) + 4 H2O = N(4)-(alpha-D-Man-(1-&gt;3)-[alpha-D-Man-(1-&gt;3)-[alpha-D-Man-(1-&gt;6)]-alpha-D-Man-(1-&gt;6)]-beta-D-Man-(1-&gt;4)-beta-D-GlcNAc-(1-&gt;4)-beta-D-GlcNAc)-L-asparaginyl-[protein] (N-glucan mannose isomer 5A1,2) + 4 beta-D-mannose. It carries out the reaction N(4)-(alpha-D-Man-(1-&gt;2)-alpha-D-Man-(1-&gt;2)-alpha-D-Man-(1-&gt;3)-[alpha-D-Man-(1-&gt;3)-[alpha-D-Man-(1-&gt;2)-alpha-D-Man-(1-&gt;6)]-alpha-D-Man-(1-&gt;6)]-beta-D-Man-(1-&gt;4)-beta-D-GlcNAc-(1-&gt;4)-beta-D-GlcNAc)-L-asparaginyl-[protein] (N-glucan mannose isomer 8A1,2,3B1,3) + 3 H2O = N(4)-(alpha-D-Man-(1-&gt;3)-[alpha-D-Man-(1-&gt;3)-[alpha-D-Man-(1-&gt;6)]-alpha-D-Man-(1-&gt;6)]-beta-D-Man-(1-&gt;4)-beta-D-GlcNAc-(1-&gt;4)-beta-D-GlcNAc)-L-asparaginyl-[protein] (N-glucan mannose isomer 5A1,2) + 3 beta-D-mannose. It functions in the pathway protein modification; protein glycosylation. Its activity is regulated as follows. Inhibited by both 1-deoxymannojirimycin and kifunensine. Involved in the maturation of Asn-linked oligosaccharides. Progressively trim alpha-1,2-linked mannose residues from Man(9)GlcNAc(2) to produce Man(5)GlcNAc(2). The protein is Mannosyl-oligosaccharide 1,2-alpha-mannosidase IB (MAN1A2) of Homo sapiens (Human).